The primary structure comprises 181 residues: Large ribosomal subunit protein bL17 (181 aa).

A compositionally biased stretch (low complexity) spans 141-159 (KAASATAESAPVATANDAA). The segment at 141-181 (KAASATAESAPVATANDAAPAEEAEVQGVKDPAEDCEAKAD) is disordered. Positions 171–181 (DPAEDCEAKAD) are enriched in basic and acidic residues.

This sequence belongs to the bacterial ribosomal protein bL17 family. In terms of assembly, part of the 50S ribosomal subunit. Contacts protein L32.

This Geotalea daltonii (strain DSM 22248 / JCM 15807 / FRC-32) (Geobacter daltonii) protein is Large ribosomal subunit protein bL17.